The following is a 292-amino-acid chain: 11-beta-hydroxysteroid dehydrogenase 1 (292 aa).

The Cytoplasmic segment spans residues 1-7 (MAFMKKY). The chain crosses the membrane as a helical; Signal-anchor for type II membrane protein span at residues 8–24 (LLPILGIFLAYYYYSAN). The Lumenal portion of the chain corresponds to 25 to 292 (EEFRPEMLRG…KYNMERFINN (268 aa)). NADP(+) contacts are provided by residues 41-67 (GASK…TARS) and 92-93 (TM). A glycan (N-linked (GlcNAc...) asparagine) is linked at Asn-95. 119–121 (NHI) provides a ligand contact to NADP(+). Ser-170 is a binding site for substrate. Tyr-183 (proton acceptor) is an active-site residue. 183 to 187 (YSASK) contacts NADP(+). Residue Asn-207 is glycosylated (N-linked (GlcNAc...) asparagine). NADP(+)-binding positions include 216–222 (GLIDTDT) and 218–222 (IDTDT).

Belongs to the short-chain dehydrogenases/reductases (SDR) family. As to quaternary structure, homodimer. In terms of tissue distribution, liver, kidney, lung, hypothalamus, anterior pituitary and placenta.

Its subcellular location is the endoplasmic reticulum membrane. It carries out the reaction an 11beta-hydroxysteroid + NADP(+) = an 11-oxosteroid + NADPH + H(+). It catalyses the reaction corticosterone + NADP(+) = 11-dehydrocorticosterone + NADPH + H(+). The catalysed reaction is cortisone + NADPH + H(+) = cortisol + NADP(+). The enzyme catalyses a 7beta-hydroxysteroid + NADP(+) = a 7-oxosteroid + NADPH + H(+). It carries out the reaction 7-oxocholesterol + NADPH + H(+) = 7beta-hydroxycholesterol + NADP(+). It catalyses the reaction chenodeoxycholate + NADP(+) = 7-oxolithocholate + NADPH + H(+). The catalysed reaction is 7-oxolithocholate + NADPH + H(+) = ursodeoxycholate + NADP(+). The enzyme catalyses glycochenodeoxycholate + NADP(+) = 7-oxoglycolithocholate + NADPH + H(+). It carries out the reaction taurochenodeoxycholate + NADP(+) = 7-oxotaurolithocholate + NADPH + H(+). It catalyses the reaction tauroursodeoxycholate + NADP(+) = 7-oxotaurolithocholate + NADPH + H(+). The catalysed reaction is glycoursodeoxycholate + NADP(+) = 7-oxoglycolithocholate + NADPH + H(+). The enzyme catalyses 7-oxopregnenolone + NADPH + H(+) = 7beta-hydroxypregnenolone + NADP(+). It carries out the reaction 3beta,7alpha-dihydroxyandrost-5-en-17-one + NADP(+) = 3beta-hydroxy-5-androstene-7,17-dione + NADPH + H(+). It catalyses the reaction 3beta-hydroxy-5-androstene-7,17-dione + NADPH + H(+) = 3beta,7beta-dihydroxyandrost-5-en-17-one + NADP(+). The catalysed reaction is 3beta-hydroxy-5alpha-androstane-7,17-dione + NADPH + H(+) = 3beta,7beta-dihydroxy-5alpha-androstan-17-one + NADP(+). Its function is as follows. Controls the reversible conversion of biologically active glucocorticoids such as cortisone to cortisol, and 11-dehydrocorticosterone to corticosterone in the presence of NADP(H). Participates in the corticosteroid receptor-mediated anti-inflammatory response, as well as metabolic and homeostatic processes. Plays a role in the secretion of aqueous humor in the eye, maintaining a normotensive, intraocular environment. Bidirectional in vitro, predominantly functions as a reductase in vivo, thereby increasing the concentration of active glucocorticoids. It has broad substrate specificity, besides glucocorticoids, it accepts other steroid and sterol substrates. Interconverts 7-oxo- and 7-hydroxy-neurosteroids such as 7-oxopregnenolone and 7beta-hydroxypregnenolone, 7-oxodehydroepiandrosterone (3beta-hydroxy-5-androstene-7,17-dione) and 7beta-hydroxydehydroepiandrosterone (3beta,7beta-dihydroxyandrost-5-en-17-one), among others. Catalyzes the stereo-specific conversion of the major dietary oxysterol, 7-ketocholesterol (7-oxocholesterol), into the more polar 7-beta-hydroxycholesterol metabolite. 7-oxocholesterol is one of the most important oxysterols, it participates in several events such as induction of apoptosis, accumulation in atherosclerotic lesions, lipid peroxidation, and induction of foam cell formation. Mediates the 7-oxo reduction of 7-oxolithocholate mainly to chenodeoxycholate, and to a lesser extent to ursodeoxycholate, both in its free form and when conjugated to glycine or taurine, providing a link between glucocorticoid activation and bile acid metabolism. Catalyzes the synthesis of 7-beta-25-dihydroxycholesterol from 7-oxo-25-hydroxycholesterol in vitro, which acts as a ligand for the G-protein-coupled receptor (GPCR) Epstein-Barr virus-induced gene 2 (EBI2) and may thereby regulate immune cell migration. The protein is 11-beta-hydroxysteroid dehydrogenase 1 (HSD11B1) of Ovis aries (Sheep).